We begin with the raw amino-acid sequence, 146 residues long: Hemoglobin subunit beta (146 aa).

In terms of domain architecture, Globin spans 2–146; sequence HWTAEEKQLI…VAHALARKYH (145 aa). Heme b is bound by residues His-63 and His-92.

This sequence belongs to the globin family. As to quaternary structure, heterotetramer of two alpha chains and two beta chains. In terms of tissue distribution, red blood cells.

In terms of biological role, involved in oxygen transport from the lung to the various peripheral tissues. This chain is Hemoglobin subunit beta (HBB), found in Ara ararauna (Blue-and-yellow macaw).